Reading from the N-terminus, the 420-residue chain is F-box protein At5g07610 (420 aa).

Residues 1–25 (MSSCSRTRTKAPRSARSRRNGGFSS) form a disordered region. Residues 7-19 (TRTKAPRSARSRR) show a composition bias toward basic residues. The 51-residue stretch at 27–77 (SATIVADIDDVLIQILSFLPIKTLLRFKRVSKRWLSLITNPVFSNRVIKSN) folds into the F-box domain.

This Arabidopsis thaliana (Mouse-ear cress) protein is F-box protein At5g07610.